A 239-amino-acid chain; its full sequence is Protein canopy homolog 4 (239 aa).

A signal peptide spans M1–A20. Disulfide bonds link C37–C195, C40–C183, and C93–C155. The interval T199–L239 is disordered. Residues T201–K212 show a composition bias toward basic and acidic residues. A compositionally biased stretch (acidic residues) spans T213–M225.

This sequence belongs to the canopy family. In terms of assembly, interacts with TLR4.

The protein resides in the secreted. Functionally, plays a role in the regulation of the cell surface expression of TLR4. This chain is Protein canopy homolog 4 (CNPY4), found in Bos taurus (Bovine).